We begin with the raw amino-acid sequence, 380 residues long: MIYKFNIRNLRMIIMKLVKDALSRSDTTRYLKDEFGEARIVVVGCGGAGNNTINRLMEIGIQGAETIAINTDKQHLEVIQADKKILIGATLTRGLGAGGYPEIGRKAAEMAKNILEEQLKGADLVFVTAGMGGGTGTGSAPVVAEVAKENGAIVVGVVTYPFKIERARMKKADEGIARMSEVCDTVIIIDNNKLLDLVPNLPINDAFKVADEIIAQAVKGITETIAVPSLINIDFADVKAVMSGGGVAMIGVGEVDSSDRGDRVQNVVRETLSCPLLDVDYRGAKGALIHITGGPDLTLKEANDIGEGITKELDPEANVIWGARIDPEMEGCIRVMAIITGVKSPNIVGKDTKPKRIIPKVSKEQSQRKERKIGGIDFIV.

GTP contacts are provided by residues 47 to 51, 134 to 136, Glu-165, Arg-168, and Asp-211; these read GAGNN and GTG.

The protein belongs to the FtsZ family. In terms of assembly, homodimer. Polymerizes to form a dynamic ring structure in a strictly GTP-dependent manner. Interacts directly with several other division proteins.

It is found in the cytoplasm. In terms of biological role, essential cell division protein that forms a contractile ring structure (Z ring) at the future cell division site. The regulation of the ring assembly controls the timing and the location of cell division. One of the functions of the FtsZ ring is to recruit other cell division proteins to the septum to produce a new cell wall between the dividing cells. Binds GTP and shows GTPase activity. This chain is Cell division protein FtsZ 2, found in Methanocaldococcus jannaschii (strain ATCC 43067 / DSM 2661 / JAL-1 / JCM 10045 / NBRC 100440) (Methanococcus jannaschii).